A 133-amino-acid polypeptide reads, in one-letter code: DNA-directed RNA polymerases I, II, and III subunit rpabc2 (133 aa).

Residues 1–32 (MADFEGGGDDGGYEEFDEGGGFEEEYVEETET) are compositionally biased toward acidic residues. Residues 1–55 (MADFEGGGDDGGYEEFDEGGGFEEEYVEETETTEAYTDIIDPSADANTAEAGRIP) are disordered.

This sequence belongs to the archaeal Rpo6/eukaryotic RPB6 RNA polymerase subunit family. Component of the RNA polymerase I (Pol I), RNA polymerase II (Pol II) and RNA polymerase III (Pol III) complexes consisting of at least 13, 12 and 17 subunits, respectively.

The protein localises to the nucleus. Its function is as follows. DNA-dependent RNA polymerases catalyze the transcription of DNA into RNA using the four ribonucleoside triphosphates as substrates. Common component of RNA polymerases I, II and III which synthesize ribosomal RNA precursors, mRNA precursors and many functional non-coding RNAs, and small RNAs, such as 5S rRNA and tRNAs, respectively. Pol II is the central component of the basal RNA polymerase II transcription machinery. Pols are composed of mobile elements that move relative to each other. In Pol II, RPB6 is part of the clamp element and together with parts of RPB1 and RPB2 forms a pocket to which the RPB4-RPB7 subcomplex binds. The chain is DNA-directed RNA polymerases I, II, and III subunit rpabc2 (polr2f) from Dictyostelium discoideum (Social amoeba).